We begin with the raw amino-acid sequence, 92 residues long: Small ribosomal subunit protein uS19 (92 aa).

The protein belongs to the universal ribosomal protein uS19 family.

Protein S19 forms a complex with S13 that binds strongly to the 16S ribosomal RNA. The polypeptide is Small ribosomal subunit protein uS19 (Magnetococcus marinus (strain ATCC BAA-1437 / JCM 17883 / MC-1)).